Consider the following 570-residue polypeptide: Glycine--tRNA ligase (570 aa).

Substrate contacts are provided by arginine 99 and glutamate 165. ATP is bound by residues arginine 197–glutamate 199, leucine 207–phenylalanine 212, glutamate 324–cysteine 325, and glycine 443–arginine 446. Phenylalanine 212–glutamate 216 provides a ligand contact to substrate. Glutamate 439–glycine 443 lines the substrate pocket.

The protein belongs to the class-II aminoacyl-tRNA synthetase family.

Its subcellular location is the cytoplasm. The catalysed reaction is tRNA(Gly) + glycine + ATP = glycyl-tRNA(Gly) + AMP + diphosphate. Functionally, catalyzes the attachment of glycine to tRNA(Gly). The sequence is that of Glycine--tRNA ligase from Thermococcus gammatolerans (strain DSM 15229 / JCM 11827 / EJ3).